Here is a 744-residue protein sequence, read N- to C-terminus: ATP-dependent zinc metalloprotease FtsH (744 aa).

Residues 1–16 are Cytoplasmic-facing; the sequence is MQDQNNSNTPKKKKLS. Residues 17–37 traverse the membrane as a helical segment; the sequence is FWGIIGIVASILVLLVIAYII. At 38-177 the chain is on the extracellular side; it reads YYYVSQTTVL…ESIWSTVLRY (140 aa). The helical transmembrane segment at 178-198 threads the bilayer; sequence GTNIIFLLLFAASFIFMFMSF. Over 199-744 the chain is Cytoplasmic; that stretch reads RSQRGTGGLL…EEKSKDEKNN (546 aa). 264 to 271 provides a ligand contact to ATP; the sequence is GPPGTGKT. Histidine 486 contributes to the Zn(2+) binding site. Glutamate 487 is an active-site residue. Histidine 490 and aspartate 564 together coordinate Zn(2+). The segment at 722 to 744 is disordered; the sequence is IEANKSSSKSTVNEEKSKDEKNN. Over residues 733–744 the composition is skewed to basic and acidic residues; that stretch reads VNEEKSKDEKNN.

It in the central section; belongs to the AAA ATPase family. This sequence in the C-terminal section; belongs to the peptidase M41 family. In terms of assembly, homohexamer. Zn(2+) is required as a cofactor.

The protein localises to the cell membrane. Functionally, acts as a processive, ATP-dependent zinc metallopeptidase for both cytoplasmic and membrane proteins. Plays a role in the quality control of integral membrane proteins. The polypeptide is ATP-dependent zinc metalloprotease FtsH (Metamycoplasma arthritidis (strain 158L3-1) (Mycoplasma arthritidis)).